Here is a 728-residue protein sequence, read N- to C-terminus: 1,4-alpha-glucan branching enzyme GlgB (728 aa).

Asp405 functions as the Nucleophile in the catalytic mechanism. Glu458 serves as the catalytic Proton donor.

The protein belongs to the glycosyl hydrolase 13 family. GlgB subfamily. Monomer.

The catalysed reaction is Transfers a segment of a (1-&gt;4)-alpha-D-glucan chain to a primary hydroxy group in a similar glucan chain.. It participates in glycan biosynthesis; glycogen biosynthesis. In terms of biological role, catalyzes the formation of the alpha-1,6-glucosidic linkages in glycogen by scission of a 1,4-alpha-linked oligosaccharide from growing alpha-1,4-glucan chains and the subsequent attachment of the oligosaccharide to the alpha-1,6 position. This chain is 1,4-alpha-glucan branching enzyme GlgB, found in Shigella flexneri serotype 5b (strain 8401).